The sequence spans 741 residues: Zinc finger and BTB domain-containing protein 20 (741 aa).

The segment covering 1 to 17 has biased composition (basic and acidic residues); the sequence is MLERKKPKTAENQKASE. The interval 1–32 is disordered; that stretch reads MLERKKPKTAENQKASEENEITQPGGSSAKPG. A BTB domain is found at 104-167; that stretch reads CDVTVRIHGS…MYSGVLRVSQ (64 aa). The disordered stretch occupies residues 203 to 235; that stretch reads GIQDSGQDTPRGTPESGTSGQSSDTESGYLQSH. Residues 206–235 show a composition bias toward polar residues; that stretch reads DSGQDTPRGTPESGTSGQSSDTESGYLQSH. Thr-211 is modified (phosphothreonine). Lys-330 is covalently cross-linked (Glycyl lysine isopeptide (Lys-Gly) (interchain with G-Cter in SUMO1); alternate). Residue Lys-330 forms a Glycyl lysine isopeptide (Lys-Gly) (interchain with G-Cter in SUMO2); alternate linkage. Positions 350–440 are disordered; sequence RNESEECTED…SSPERSNEVE (91 aa). At Ser-353 the chain carries Phosphoserine. Positions 354 to 367 are enriched in acidic residues; that stretch reads EECTEDTDQAEGTE. The residue at position 357 (Thr-357) is a Phosphothreonine. Lys-371 is covalently cross-linked (Glycyl lysine isopeptide (Lys-Gly) (interchain with G-Cter in SUMO2)). The span at 404-423 shows a compositional bias: low complexity; that stretch reads AEPTQPEQAAEAPAEGGPQT. Polar residues predominate over residues 424-434; it reads NQLETGASSPE. 4 consecutive C2H2-type zinc fingers follow at residues 578–600, 606–628, 634–656, and 662–684; these read YECT…MFVH, HQCS…MVTH, YQCS…MRLH, and YECY…VALH. Phosphothreonine is present on residues Thr-690 and Thr-695. Residues 715 to 737 form a C2H2-type 5 zinc finger; sequence YVCSVCPAKFDQIEQFNDHMRMH. Lys-723 participates in a covalent cross-link: Glycyl lysine isopeptide (Lys-Gly) (interchain with G-Cter in SUMO2).

In terms of assembly, can homodimerize. Binds to DNA. Sumoylated with SUMO1. In terms of tissue distribution, expressed in spleen, lymph node, thymus, peripheral blood leukocytes, and fetal liver.

It is found in the nucleus. Functionally, may be a transcription factor that may be involved in hematopoiesis, oncogenesis, and immune responses. Plays a role in postnatal myogenesis, may be involved in the regulation of satellite cells self-renewal. In Homo sapiens (Human), this protein is Zinc finger and BTB domain-containing protein 20 (ZBTB20).